Here is a 570-residue protein sequence, read N- to C-terminus: Laccase-3 (570 aa).

A signal peptide spans 1-25; sequence MESFRRFSLLSFIALLAYFAFLASA. 2 Plastocyanin-like domains span residues 33–149 and 159–310; these read VITP…PRLG and RDIP…YVNA. The N-linked (GlcNAc...) asparagine glycan is linked to Asn-79. Cu cation-binding residues include His-83, His-85, His-128, and His-130. Asn-188, Asn-298, Asn-332, Asn-383, Asn-393, and Asn-433 each carry an N-linked (GlcNAc...) asparagine glycan. Positions 419-554 constitute a Plastocyanin-like 3 domain; sequence DFPPVPPVQF…AMVFLVENGR (136 aa). Cu cation-binding residues include His-471, His-474, His-476, His-533, Cys-534, His-535, and His-539.

The protein belongs to the multicopper oxidase family. The cofactor is Cu cation. In terms of tissue distribution, mostly expressed in roots and siliques.

It localises to the secreted. Its subcellular location is the extracellular space. The protein localises to the apoplast. The enzyme catalyses 4 hydroquinone + O2 = 4 benzosemiquinone + 2 H2O. Lignin degradation and detoxification of lignin-derived products. The polypeptide is Laccase-3 (LAC3) (Arabidopsis thaliana (Mouse-ear cress)).